The following is a 316-amino-acid chain: E3 ubiquitin-protein ligase rnf146 (316 aa).

Residues 36 to 74 (CAICLQTCVHPVSLPCKHIFCYLCVKGASWLGRRCALCR) form an RING-type zinc finger. A WWE domain is found at 91–167 (EELKSASRGN…EHGRRRKIKR (77 aa)). The a glycoprotein site is built by Tyr-107, Arg-110, Trp-114, Tyr-144, Gln-153, Arg-163, and Lys-175. A disordered region spans residues 257–316 (GRNNIGEGEEGQPLINARMPAPSALLEESEPSDSNDHGSPTLQHNSLLVPQSNRLPFGNP). Residues 293-310 (HGSPTLQHNSLLVPQSNR) show a composition bias toward polar residues.

It localises to the cytoplasm. It is found in the cytosol. The protein localises to the nucleus. It catalyses the reaction S-ubiquitinyl-[E2 ubiquitin-conjugating enzyme]-L-cysteine + [acceptor protein]-L-lysine = [E2 ubiquitin-conjugating enzyme]-L-cysteine + N(6)-ubiquitinyl-[acceptor protein]-L-lysine.. It participates in protein modification; protein ubiquitination. In terms of biological role, E3 ubiquitin-protein ligase that specifically binds poly-ADP-ribosylated proteins and mediates their ubiquitination and subsequent degradation. May regulate many important biological processes, such as cell survival and DNA damage response. Acts as an activator of the Wnt signaling pathway by mediating the ubiquitination of poly-ADP-ribosylated proteins. Neuroprotective protein. Protects against cell death induced by DNA damaging agents and rescues cells from G1 arrest. Promotes cell survival after gamma-irradiation. Facilitates DNA repair. This Xenopus tropicalis (Western clawed frog) protein is E3 ubiquitin-protein ligase rnf146 (rnf146).